The following is a 206-amino-acid chain: ATP synthase subunit b (206 aa).

Residues 14–34 form a helical membrane-spanning segment; the sequence is VMMPAAVCAAVIGLSALGFAA.

It belongs to the ATPase B chain family. F-type ATPases have 2 components, F(1) - the catalytic core - and F(0) - the membrane proton channel. F(1) has five subunits: alpha(3), beta(3), gamma(1), delta(1), epsilon(1). F(0) has three main subunits: a(1), b(2) and c(10-14). The alpha and beta chains form an alternating ring which encloses part of the gamma chain. F(1) is attached to F(0) by a central stalk formed by the gamma and epsilon chains, while a peripheral stalk is formed by the delta and b chains.

The protein localises to the cell inner membrane. In terms of biological role, f(1)F(0) ATP synthase produces ATP from ADP in the presence of a proton or sodium gradient. F-type ATPases consist of two structural domains, F(1) containing the extramembraneous catalytic core and F(0) containing the membrane proton channel, linked together by a central stalk and a peripheral stalk. During catalysis, ATP synthesis in the catalytic domain of F(1) is coupled via a rotary mechanism of the central stalk subunits to proton translocation. Functionally, component of the F(0) channel, it forms part of the peripheral stalk, linking F(1) to F(0). In Geobacter metallireducens (strain ATCC 53774 / DSM 7210 / GS-15), this protein is ATP synthase subunit b.